An 835-amino-acid polypeptide reads, in one-letter code: Peptide transporter family 1 (835 aa).

11 helical membrane-spanning segments follow: residues 86 to 106 (IFFN…SIVA), 113 to 133 (FWTI…LALA), 150 to 170 (GLLI…AFGG), 183 to 203 (LFFS…TFIS), 222 to 242 (FGIP…GSFW), 325 to 345 (MFLP…VWLI), 368 to 388 (LNAV…YPVA), 401 to 421 (VTGG…QLQV), 697 to 717 (ILWQ…FSIT), 738 to 758 (WLLT…LNLF), and 765 to 785 (FFVY…LSIF). Residues 814-835 (PRYSIDNKGFHPDEKDTFDMHF) form a disordered region. The segment covering 821 to 835 (KGFHPDEKDTFDMHF) has biased composition (basic and acidic residues).

Belongs to the major facilitator superfamily. Proton-dependent oligopeptide transporter (POT/PTR) (TC 2.A.17) family. In terms of tissue distribution, expressed specifically in the intestine.

The protein localises to the apical cell membrane. Its function is as follows. Low-affinity peptide transporter that is necessary for proton-dependent uptake of di- or tripeptides, and to a minor extent tetrapeptides, in the intestine. Transport is independent of sodium and chloride ions. Controls the uptake of dietary fatty acids, plays a role in fatty acid synthesis and is responsible for dipeptide-induced acidification of the intestine. Regulates cellular pH differences together with the antiporter protein, nhx-2. Amino acid uptake and absorption levels influence the insulin signaling/daf-2 and let-363/TOR pathways, subsequently affecting the stress response and longevity of the organism. It is required for the uptake of the L-enantiomers of various amino acids, including L-glutamate. In response to the availability of amino acid nutrients, may play a role in promoting reproduction and fertility. In Caenorhabditis elegans, this protein is Peptide transporter family 1.